Here is a 196-residue protein sequence, read N- to C-terminus: MNRTAKISRKTKETDITLELNLDGTGIAEIETGIGFLDHMVQSFAKHGFFDLTIKVKGDLYVDSHHTVEDTGIVLGQAIKQALDEKIGIRRYGSFLLPMDETLVLCAIDLSGRPYLNYQAQLTCEKLGYMDTELVKEFFYAISYSAGMNLHIKQMDGNNNHHIVEAMFKAFAKALDEASGIDPRIQGVLSTKGTVE.

Belongs to the imidazoleglycerol-phosphate dehydratase family.

Its subcellular location is the cytoplasm. It catalyses the reaction D-erythro-1-(imidazol-4-yl)glycerol 3-phosphate = 3-(imidazol-4-yl)-2-oxopropyl phosphate + H2O. It functions in the pathway amino-acid biosynthesis; L-histidine biosynthesis; L-histidine from 5-phospho-alpha-D-ribose 1-diphosphate: step 6/9. The chain is Imidazoleglycerol-phosphate dehydratase from Lachnoclostridium phytofermentans (strain ATCC 700394 / DSM 18823 / ISDg) (Clostridium phytofermentans).